The sequence spans 219 residues: Ribose-5-phosphate isomerase A (219 aa).

Substrate contacts are provided by residues Thr28–Thr31, Asp81–Asp84, and Lys94–Gly97. Glu103 serves as the catalytic Proton acceptor. Residue Lys121 participates in substrate binding.

The protein belongs to the ribose 5-phosphate isomerase family. As to quaternary structure, homodimer.

The enzyme catalyses aldehydo-D-ribose 5-phosphate = D-ribulose 5-phosphate. Its pathway is carbohydrate degradation; pentose phosphate pathway; D-ribose 5-phosphate from D-ribulose 5-phosphate (non-oxidative stage): step 1/1. Catalyzes the reversible conversion of ribose-5-phosphate to ribulose 5-phosphate. The sequence is that of Ribose-5-phosphate isomerase A from Photorhabdus laumondii subsp. laumondii (strain DSM 15139 / CIP 105565 / TT01) (Photorhabdus luminescens subsp. laumondii).